Here is a 1261-residue protein sequence, read N- to C-terminus: Myosin-1 (1261 aa).

The disordered stretch occupies residues 1–39 (MGHSRRPVGGEKKSRGFGRSKVADVGDGRQAGKPQVKKA). Positions 49–728 (IGVSDLTLLS…TLFALEAMRD (680 aa)) constitute a Myosin motor domain. 142-149 (GESGAGKT) provides a ligand contact to ATP. Ser370 is modified (phosphoserine). The actin-binding stretch occupies residues 417–499 (SIGILDIYGF…PGVFAALNDA (83 aa)). 2 consecutive IQ domains span residues 732–752 (HNMA…RIEC) and 753–778 (AIRI…QGHQ). The region spanning 786–973 (RRRMSLLGSR…KSHTIHTSPG (188 aa)) is the TH1 domain. 2 disordered regions span residues 956–1093 (ASPN…KALY) and 1139–1261 (YLEE…DDEW). 4 stretches are compositionally biased toward pro residues: residues 1019–1029 (RPTPKPQPLPQ), 1038–1052 (IPAP…PVPQ), 1072–1084 (APPP…PPAP), and 1147–1159 (TPKP…PPAA). Residues 1084-1145 (PKKATAKALY…PQAYLEEQVA (62 aa)) form the SH3 domain. Over residues 1160–1181 (PRASPVPSANGAAATAAAAKAK) the composition is skewed to low complexity. The span at 1212–1233 (VSMNSQDSSGGSGRGTPNSTSN) shows a compositional bias: polar residues. The segment covering 1234-1243 (ASLAGGLAEA) has biased composition (low complexity).

This sequence belongs to the TRAFAC class myosin-kinesin ATPase superfamily. Myosin family. Post-translationally, phosphorylation of the TEDS site (Ser-370) is required for the polarization of the actin cytoskeleton. Phosphorylation probably activates the myosin-I ATPase activity.

It localises to the cytoplasm. It is found in the cytoskeleton. The protein localises to the actin patch. In terms of biological role, type-I myosin implicated in the organization of the actin cytoskeleton. Required for proper actin cytoskeleton polarization. At the cell cortex, assembles in patch-like structures together with proteins from the actin-polymerizing machinery and promotes actin assembly. Functions as actin nucleation-promoting factor (NPF) for the Arp2/3 complex. Plays an important role in polarized growth, spore germination, hyphal morphogenesis, and septal wall formation. In Aspergillus oryzae (strain ATCC 42149 / RIB 40) (Yellow koji mold), this protein is Myosin-1 (myoA).